We begin with the raw amino-acid sequence, 191 residues long: UPF0312 protein Pmen_0419 (191 aa).

The N-terminal stretch at 1-22 is a signal peptide; that stretch reads MLKNALAALVLGSALIGGQAMA.

This sequence belongs to the UPF0312 family. Type 1 subfamily.

Its subcellular location is the periplasm. This chain is UPF0312 protein Pmen_0419, found in Ectopseudomonas mendocina (strain ymp) (Pseudomonas mendocina).